The following is a 61-amino-acid chain: U-scoloptoxin(14)-Sm1a (61 aa).

The N-terminal stretch at 1 to 24 (MNPKLCMLLLVCLMAFYVIETVQA) is a signal peptide.

This sequence belongs to the scoloptoxin-14 family. Post-translationally, contains 4 disulfide bonds. As to expression, expressed by the venom gland.

It localises to the secreted. This is U-scoloptoxin(14)-Sm1a from Scolopendra morsitans (Tanzanian blue ringleg centipede).